The chain runs to 221 residues: Phosphoribosylformylglycinamidine synthase subunit PurQ (221 aa).

Positions 8–221 (NVGIIRFPGT…GLKFFKSFLD (214 aa)) constitute a Glutamine amidotransferase type-1 domain. Cysteine 91 serves as the catalytic Nucleophile. Residues histidine 198 and glutamate 200 contribute to the active site.

As to quaternary structure, part of the FGAM synthase complex composed of 1 PurL, 1 PurQ and 2 PurS subunits.

The protein localises to the cytoplasm. The catalysed reaction is N(2)-formyl-N(1)-(5-phospho-beta-D-ribosyl)glycinamide + L-glutamine + ATP + H2O = 2-formamido-N(1)-(5-O-phospho-beta-D-ribosyl)acetamidine + L-glutamate + ADP + phosphate + H(+). It catalyses the reaction L-glutamine + H2O = L-glutamate + NH4(+). It participates in purine metabolism; IMP biosynthesis via de novo pathway; 5-amino-1-(5-phospho-D-ribosyl)imidazole from N(2)-formyl-N(1)-(5-phospho-D-ribosyl)glycinamide: step 1/2. Its function is as follows. Part of the phosphoribosylformylglycinamidine synthase complex involved in the purines biosynthetic pathway. Catalyzes the ATP-dependent conversion of formylglycinamide ribonucleotide (FGAR) and glutamine to yield formylglycinamidine ribonucleotide (FGAM) and glutamate. The FGAM synthase complex is composed of three subunits. PurQ produces an ammonia molecule by converting glutamine to glutamate. PurL transfers the ammonia molecule to FGAR to form FGAM in an ATP-dependent manner. PurS interacts with PurQ and PurL and is thought to assist in the transfer of the ammonia molecule from PurQ to PurL. The chain is Phosphoribosylformylglycinamidine synthase subunit PurQ from Methanosphaera stadtmanae (strain ATCC 43021 / DSM 3091 / JCM 11832 / MCB-3).